Here is a 134-residue protein sequence, read N- to C-terminus: Translation initiation factor 2 subunit beta (134 aa).

Basic and acidic residues predominate over residues 1–12 (MGYEEQLDRALE). Positions 1 to 32 (MGYEEQLDRALEETPDIEGTAARFSVPDPDVR) are disordered.

It belongs to the eIF-2-beta/eIF-5 family. Heterotrimer composed of an alpha, a beta and a gamma chain.

In terms of biological role, eIF-2 functions in the early steps of protein synthesis by forming a ternary complex with GTP and initiator tRNA. The polypeptide is Translation initiation factor 2 subunit beta (Natronomonas pharaonis (strain ATCC 35678 / DSM 2160 / CIP 103997 / JCM 8858 / NBRC 14720 / NCIMB 2260 / Gabara) (Halobacterium pharaonis)).